The chain runs to 534 residues: H(+)/hexose cotransporter 1 (534 aa).

The Cytoplasmic segment spans residues 1 to 21 (MAGGGVVVVSGRGLSTGDYRG). Residues 22-42 (GLTVYVVMVAFMAACGGLLLG) traverse the membrane as a helical segment. Residues 43–87 (YDNGVTGGVVSLEAFEKKFFPDVWAKKQEVHEDSPYCTYDNAKLQ) lie on the Extracellular side of the membrane. Residues 88–108 (LFVSSLFLAGLVSCLFASWIT) form a helical membrane-spanning segment. At 109-114 (RNWGRK) the chain is on the cytoplasmic side. A helical membrane pass occupies residues 115–135 (VTMGIGGAFFVAGGLVNAFAQ). The Extracellular segment spans residues 136-144 (DMAMLIVGR). Residues 145–165 (VLLGFGVGLGSQVVPQYLSEV) form a helical membrane-spanning segment. At 166-173 (APFSHRGM) the chain is on the cytoplasmic side. Residues 174–194 (LNIGYQLFVTIGILIAGLVNY) form a helical membrane-spanning segment. Over 195-204 (AVRDWENGWR) the chain is Extracellular. Residues 205 to 225 (LSLGPAAAPGAILFLGSLVLP) traverse the membrane as a helical segment. Topologically, residues 226-299 (ESPNFLVEKG…TSFVIQFFQQ (74 aa)) are cytoplasmic. Residues 300-322 (FTGINAIIFYVPVLFSSLGSANS) form a helical membrane-spanning segment. Over 323–328 (AALLNT) the chain is Extracellular. A helical membrane pass occupies residues 329–349 (VVVGAVNVGSTLIAVMFSDKF). Residues 350-352 (GRR) are Cytoplasmic-facing. Residues 353-373 (FLLIEGGIQCCLAMLTTGVVL) traverse the membrane as a helical segment. The Extracellular portion of the chain corresponds to 374-387 (AIEFAKYGTDPLPK). The chain crosses the membrane as a helical span at residues 388-408 (AVASGILAVICIFISGFAWSW). Topologically, residues 409-433 (GPMGWLIPSEIFTLETRPAGTAVAV) are cytoplasmic. A helical transmembrane segment spans residues 434–454 (VGNFLFSFVIGQAFVSMLCAM). Residues 455-456 (EY) are Extracellular-facing. Residues 457–477 (GVFLFFAGWLVIMVLCAIFLL) form a helical membrane-spanning segment. Residues 478–534 (PETKGVPIERVQALYARHWFWNRVMGPAAAEVIAEDEKRVAAASAIIKEEELSKAMK) lie on the Cytoplasmic side of the membrane.

The protein belongs to the major facilitator superfamily. Sugar transporter (TC 2.A.1.1) family.

The protein localises to the membrane. Active uptake of hexoses. This Parachlorella kessleri (Green alga) protein is H(+)/hexose cotransporter 1 (HUP1).